Reading from the N-terminus, the 108-residue chain is Gibberellin-regulated protein 7 (108 aa).

A signal peptide spans 1–23 (MKIIVSILVLASLLLISSSLASA).

It belongs to the GASA family. Six disulfide bonds may be present.

Its subcellular location is the secreted. Its function is as follows. Gibberellin-regulated protein that may function in hormonal controlled steps of development such as seed germination, flowering and seed maturation. This is Gibberellin-regulated protein 7 (GASA7) from Arabidopsis thaliana (Mouse-ear cress).